Here is a 450-residue protein sequence, read N- to C-terminus: tRNA-2-methylthio-N(6)-dimethylallyladenosine synthase (450 aa).

The region spanning 14–132 is the MTTase N-terminal domain; that stretch reads GEFFIETWGC…FPNYLNEVKK (119 aa). Positions 23, 59, 93, 169, 173, and 176 each coordinate [4Fe-4S] cluster. One can recognise a Radical SAM core domain in the interval 155-385; sequence RKNSMKAFVT…VEVVNEISAK (231 aa). A TRAM domain is found at 388–450; it reads KAYEGKIEEV…NSFSLTGEEI (63 aa).

Belongs to the methylthiotransferase family. MiaB subfamily. In terms of assembly, monomer. The cofactor is [4Fe-4S] cluster.

It is found in the cytoplasm. It catalyses the reaction N(6)-dimethylallyladenosine(37) in tRNA + (sulfur carrier)-SH + AH2 + 2 S-adenosyl-L-methionine = 2-methylsulfanyl-N(6)-dimethylallyladenosine(37) in tRNA + (sulfur carrier)-H + 5'-deoxyadenosine + L-methionine + A + S-adenosyl-L-homocysteine + 2 H(+). In terms of biological role, catalyzes the methylthiolation of N6-(dimethylallyl)adenosine (i(6)A), leading to the formation of 2-methylthio-N6-(dimethylallyl)adenosine (ms(2)i(6)A) at position 37 in tRNAs that read codons beginning with uridine. The chain is tRNA-2-methylthio-N(6)-dimethylallyladenosine synthase from Clostridium botulinum (strain Loch Maree / Type A3).